The chain runs to 104 residues: uncharacterized protein (104 aa).

Transmembrane regions (helical) follow at residues 53–73 (IWGI…NWDF) and 74–94 (ILNL…LILI).

The protein resides in the cell membrane. This is an uncharacterized protein from Methanocaldococcus jannaschii (strain ATCC 43067 / DSM 2661 / JAL-1 / JCM 10045 / NBRC 100440) (Methanococcus jannaschii).